Reading from the N-terminus, the 1840-residue chain is Collagen alpha-1(V) chain (1840 aa).

An N-terminal signal peptide occupies residues 1–36; it reads MDVHTRWKDRLPVGPAAVPPLLLLLLLLWAPPQSRA. The Laminin G-like domain occupies 72–244; that stretch reads DVAYRVSKDA…DYCEHYSPDC (173 aa). The segment at 231 to 445 is nonhelical region; sequence RAAYDYCEHY…MPANQDTIYE (215 aa). Tyr-234, Tyr-236, Tyr-240, Tyr-262, Tyr-263, and Tyr-271 each carry sulfotyrosine. Disordered stretches follow at residues 242 to 523, 528 to 547, and 561 to 1576; these read PDCD…TMLM, FGGG…QESQ, and GPAG…EVIQ. Acidic residues predominate over residues 258–268; sequence NPDEYYPEGDG. Low complexity-rich tracts occupy residues 335-352 and 376-386; these read DYDY…PYED and TSTIITSNTSN. Residues 446–560 are interrupted collagenous region; it reads GIGGPRGEKG…ILQQARLALR (115 aa). The segment covering 472-487 has biased composition (pro residues); it reads PPGPEGPAGLPGPPGT. Residues 508–523 show a composition bias toward low complexity; sequence LPGADGLPGPPGTMLM. The segment covering 561 to 572 has biased composition (low complexity); the sequence is GPAGPMGLTGRP. Residues 561–1572 form a triple-helical region region; it reads GPAGPMGLTG…GLPGPPGPPG (1012 aa). A 4-hydroxyproline mark is found at Pro-572, Pro-578, and Pro-623. Lys-629 is modified (5-hydroxylysine). Pro-641 carries the post-translational modification 4-hydroxyproline. A 5-hydroxylysine modification is found at Lys-644. Residues Pro-650, Pro-656, Pro-659, Pro-677, and Pro-680 each carry the 4-hydroxyproline modification. Residues 673 to 688 are compositionally biased toward low complexity; that stretch reads PRGLPGEPGPRGLLGP. 3-hydroxyproline occurs at positions 682 and 688. Residues 689–698 are compositionally biased toward pro residues; the sequence is KGPPGPPGPP. 3 positions are modified to 4-hydroxyproline: Pro-692, Pro-698, and Pro-707. At Lys-710 the chain carries 5-hydroxylysine. Pro-719, Pro-722, Pro-728, and Pro-734 each carry 4-hydroxyproline. A compositionally biased stretch (low complexity) spans 724–743; that stretch reads QQGNPGAQGLPGPQGAIGPP. 5-hydroxylysine is present on Lys-746. The segment covering 749 to 758 has biased composition (low complexity); the sequence is LGKPGLPGMP. A 4-hydroxyproline mark is found at Pro-752, Pro-758, Pro-764, Pro-767, and Pro-773. The residue at position 776 (Lys-776) is a 5-hydroxylysine. A 4-hydroxyproline mark is found at Pro-782 and Pro-791. 5-hydroxylysine is present on residues Lys-797, Lys-806, Lys-809, and Lys-812. Pro-818 is modified (4-hydroxyproline). 5-hydroxylysine is present on Lys-821. Pro-836 carries the post-translational modification 4-hydroxyproline. Positions 839-848 are enriched in basic and acidic residues; the sequence is RGEDGPEGPK. 5-hydroxylysine occurs at positions 848 and 866. 4-hydroxyproline occurs at positions 872, 875, and 878. The residue at position 884 (Lys-884) is a 5-hydroxylysine. 4-hydroxyproline is present on residues Pro-890 and Pro-893. 5-hydroxylysine is present on Lys-899. 4-hydroxyproline is present on residues Pro-905 and Pro-908. Low complexity predominate over residues 910-919; that stretch reads PRGQRGPTGP. 2 positions are modified to 4-hydroxyproline: Pro-932 and Pro-947. Composition is skewed to low complexity over residues 973–992 and 1001–1013; these read KDGL…QGKT and VGPQ…TGPM. Pro-1019, Pro-1022, Pro-1025, and Pro-1031 each carry 4-hydroxyproline. A compositionally biased stretch (low complexity) spans 1090–1106; the sequence is SPGERGPAGAAGPIGIP. Pro residues predominate over residues 1108–1117; that stretch reads RPGPQGPPGP. Pro-1223 and Pro-1226 each carry 4-hydroxyproline. Positions 1261–1270 are enriched in low complexity; it reads PSGAPGADGP. The span at 1296–1305 shows a compositional bias: gly residues; sequence GLPGEGGPLG. Pro residues-rich tracts occupy residues 1382–1400 and 1456–1471; these read TGEP…PGPA and SPGP…PPGL. 4-hydroxyproline occurs at positions 1469 and 1472. A compositionally biased stretch (low complexity) spans 1487–1496; it reads PGLIGLIGPP. The segment covering 1528–1543 has biased composition (pro residues); the sequence is PLGPPGPPGLPGPPGP. The span at 1544–1556 shows a compositional bias: low complexity; sequence KGAKGSSGPTGPK. Residues 1573-1607 form a nonhelical region region; it reads EVIQPLPIQASRTRRNIDASQLLDDGAGESYLDYA. Sulfotyrosine is present on residues Tyr-1603 and Tyr-1606. Positions 1611–1839 constitute a Fibrillar collagen NC1 domain; that stretch reads EEIFGSLNSL…GFEVGPACFL (229 aa).

This sequence belongs to the fibrillar collagen family. As to quaternary structure, trimers of two alpha 1(V) and one alpha 2(V) chains in most tissues and trimers of one alpha 1(V), one alpha 2(V), and one alpha 3(V) chains in placenta. Interacts with CSPG4. Post-translationally, hydroxylation on proline residues within the sequence motif, GXPG, is most likely to be 4-hydroxy as this fits the requirement for 4-hydroxylation in vertebrates. Sulfated on 40% of tyrosines. As to expression, ubiquitously expressed.

Its subcellular location is the secreted. It localises to the extracellular space. The protein localises to the extracellular matrix. Its function is as follows. Type V collagen is a member of group I collagen (fibrillar forming collagen). It is a minor connective tissue component of nearly ubiquitous distribution. Type V collagen binds to DNA, heparan sulfate, thrombospondin, heparin, and insulin. The polypeptide is Collagen alpha-1(V) chain (COL5A1) (Cricetulus longicaudatus (Long-tailed dwarf hamster)).